The primary structure comprises 160 residues: Protein-export protein SecB (160 aa).

It belongs to the SecB family. As to quaternary structure, homotetramer, a dimer of dimers. One homotetramer interacts with 1 SecA dimer.

The protein localises to the cytoplasm. Functionally, one of the proteins required for the normal export of preproteins out of the cell cytoplasm. It is a molecular chaperone that binds to a subset of precursor proteins, maintaining them in a translocation-competent state. It also specifically binds to its receptor SecA. This is Protein-export protein SecB from Azorhizobium caulinodans (strain ATCC 43989 / DSM 5975 / JCM 20966 / LMG 6465 / NBRC 14845 / NCIMB 13405 / ORS 571).